A 282-amino-acid polypeptide reads, in one-letter code: Cuticle collagen 8 (282 aa).

The N-terminal stretch at 1–24 (MLVCVFVALYTMMGLLTDIKQLQS) is a signal peptide. Residues 86–282 (GPKSEGCPAG…CPCPGRSYKA (197 aa)) are disordered. 2 triple-helical region regions span residues 95 to 124 (GPPG…PGVI) and 141 to 269 (GRPG…PGPD). Residues 170–180 (TGGQGGPGEQG) are compositionally biased toward gly residues. Over residues 214-224 (PPGPRGPPGPE) the composition is skewed to pro residues. The segment covering 225-234 (GNPGGAGEDG) has biased composition (gly residues). Residues 235 to 244 (NQGPVGHPGV) show a composition bias toward low complexity.

It belongs to the cuticular collagen family. Collagen polypeptide chains are complexed within the cuticle by disulfide bonds and other types of covalent cross-links.

Functionally, nematode cuticles are composed largely of collagen-like proteins. The cuticle functions both as an exoskeleton and as a barrier to protect the worm from its environment. The chain is Cuticle collagen 8 (col-8) from Caenorhabditis elegans.